Reading from the N-terminus, the 235-residue chain is MKKINIIKIVFIITVILISTISPIIKSDSKKDISNVKSDLLYAYTITPYDYKNCRVNFSTTHTLNIDTQKYRGKDYYISSEMSYEASQKFKRDDHVDVFGLFYILNSHTGEYIYGGITPAQNNKVNHKLLGNLFISGESQQNLNNKIILEKDIVTFQEIDFKIRKYLMDNYKIYDATSPYVSGRIEIGTKDGKHEQIDLFDSPNEGTRSDIFAKYKDNRIINMKNFSHFDIYLEK.

Positions 1–27 (MKKINIIKIVFIITVILISTISPIIKS) are cleaved as a signal peptide. Zn(2+)-binding residues include histidine 194, histidine 228, and aspartate 230.

The protein belongs to the staphylococcal/streptococcal toxin family.

Its function is as follows. Superantigen that acts as a causative agent of the symptoms associated with scarlet fever. Has been associated with streptococcal toxic shock-like disease and may play a role in the early events of rheumatic fever. Superantigens cross-link major histocompatibility complex (MHC) class II and T-cell receptor (TCR) molecules, resulting in an overstimulation of T-cells associated with a massive release of pyrogenic and inflammatory cytokines. The protein is Exotoxin type C (speC) of Streptococcus pyogenes serotype M1.